Here is a 358-residue protein sequence, read N- to C-terminus: Photosystem II protein D1 (358 aa).

3 consecutive transmembrane segments (helical) span residues 28–45, 117–132, and 141–155; these read YVGW…AAAI, HFLI…QWEL, and WICV…AAFA. Chlorophyll a is bound at residue H117. W125 lines the pheophytin a pocket. 2 residues coordinate [CaMn4O5] cluster: D169 and E188. A helical transmembrane segment spans residues 196–217; sequence FHMIGVAGMFGGSLFSAMHGSL. Residue H197 participates in chlorophyll a binding. Residues H214 and 263 to 264 contribute to the a quinone site; that span reads SF. Residue H214 participates in Fe cation binding. H271 lines the Fe cation pocket. Residues 273 to 287 form a helical membrane-spanning segment; that stretch reads FLAAWPVICIWITSL. [CaMn4O5] cluster is bound by residues H331, E332, D341, and A343. A propeptide spanning residues 344–358 is cleaved from the precursor; that stretch reads AAESTPVALIAPAIG.

This sequence belongs to the reaction center PufL/M/PsbA/D family. As to quaternary structure, PSII is composed of 1 copy each of membrane proteins PsbA, PsbB, PsbC, PsbD, PsbE, PsbF, PsbH, PsbI, PsbJ, PsbK, PsbL, PsbM, PsbT, PsbX, PsbY, Psb30/Ycf12, peripheral proteins PsbO, CyanoQ (PsbQ), PsbU, PsbV and a large number of cofactors. It forms dimeric complexes. The D1/D2 heterodimer binds P680, chlorophylls that are the primary electron donor of PSII, and subsequent electron acceptors. It shares a non-heme iron and each subunit binds pheophytin, quinone, additional chlorophylls, carotenoids and lipids. D1 provides most of the ligands for the Mn4-Ca-O5 cluster of the oxygen-evolving complex (OEC). There is also a Cl(-1) ion associated with D1 and D2, which is required for oxygen evolution. The PSII complex binds additional chlorophylls, carotenoids and specific lipids. is required as a cofactor. Post-translationally, tyr-160 forms a radical intermediate that is referred to as redox-active TyrZ, YZ or Y-Z. C-terminally processed by CtpA; processing is essential to allow assembly of the oxygen-evolving complex and thus photosynthetic growth.

The protein resides in the cellular thylakoid membrane. The catalysed reaction is 2 a plastoquinone + 4 hnu + 2 H2O = 2 a plastoquinol + O2. Functionally, photosystem II (PSII) is a light-driven water:plastoquinone oxidoreductase that uses light energy to abstract electrons from H(2)O, generating O(2) and a proton gradient subsequently used for ATP formation. It consists of a core antenna complex that captures photons, and an electron transfer chain that converts photonic excitation into a charge separation. The D1/D2 (PsbA/PsbD) reaction center heterodimer binds P680, the primary electron donor of PSII as well as several subsequent electron acceptors. This chain is Photosystem II protein D1, found in Prochlorococcus marinus (strain MIT 9303).